Reading from the N-terminus, the 263-residue chain is Glutamate 5-kinase (263 aa).

Lys-14 is an ATP binding site. Substrate contacts are provided by Ser-52, Asp-137, and Asn-149. ATP-binding positions include 169–170 (SD) and 211–217 (TGGIVTK).

It belongs to the glutamate 5-kinase family. In terms of assembly, homotetramer; oligomerization is not affected by L-proline feedback inhibition. Mg(2+) is required as a cofactor.

It carries out the reaction L-glutamate + ATP = L-glutamyl 5-phosphate + ADP. It functions in the pathway amino-acid biosynthesis; L-proline biosynthesis; L-glutamate 5-semialdehyde from L-glutamate: step 1/2. Inhibited by L-proline as part of a negative feedback loop. Also inhibited by L-proline analogs 3,4-dehydro-L-proline, L-azetidine-2-carboxylic acid and L-4-thiazolidine carboxylic acid. Catalyzes the transfer of a phosphate group to glutamate to form L-glutamate 5-phosphate. May be important for growth and survival. The sequence is that of Glutamate 5-kinase from Leishmania donovani.